Reading from the N-terminus, the 374-residue chain is MISQINNKGRDNKLEAYDYFLDPSLIASKPCAIRHESRLMIVRNSVLEENCLTNKFTKNLLDEFRKGDLLVVNNTKVMKARLKVQLENRTLVELLVLERSHECVWLCLAKPAKKLKINRKIILKSPYAQDINLMVDGVDEETGGRFIKFPENITDLNSMNDLLNKYGEIPLPPYIKNSEEESFHEKSYQTEYATNPGAVAAPTAGLHLSKSLISNLKKKGVIILPITLHVGYGTFKPIDQEDLSNLKLHKEWVSVNEEVVEEIKRIKKTDRKIIAIGTTSVRALESCYSHEINDYVPIAKYVDLVIKPGYKFKVVDGLLTNFHLPKSSLLLLVSAMIGRERLLDLYKKAIKEKFRFFSYGDAMYISPDSLLEKK.

This sequence belongs to the QueA family. As to quaternary structure, monomer.

The protein resides in the cytoplasm. The enzyme catalyses 7-aminomethyl-7-carbaguanosine(34) in tRNA + S-adenosyl-L-methionine = epoxyqueuosine(34) in tRNA + adenine + L-methionine + 2 H(+). It participates in tRNA modification; tRNA-queuosine biosynthesis. In terms of biological role, transfers and isomerizes the ribose moiety from AdoMet to the 7-aminomethyl group of 7-deazaguanine (preQ1-tRNA) to give epoxyqueuosine (oQ-tRNA). This Prochlorococcus marinus (strain MIT 9215) protein is S-adenosylmethionine:tRNA ribosyltransferase-isomerase.